The following is a 427-amino-acid chain: MEVRRGDGSVFRGVLMPKHETSHPDTVVIKLGNGYNIGVLVGEGDDIVVKGSLRPGTPGALVPLLEEPLQPAEERVYIIGAGGTIASRVDYETGAVKPYLDASELATTIPELQRYASIEAEQLFSILSEDMKPSMWEAIVDRAARVLEAGYDGVVVAHGTDTMAFTASALSFAFHKGLPSPVILTGSQRSSDRPSSDAAFNLTASVLAASRAPFAEVAVVMHGETGDTYALAHRGVRVKKMHSSRRDAFQSVNDKPLARIYPFEGRVEMLRDDYRRRGESGLEVDNGFEERVALVKHFPGLISEVIDALLDRGFKGIVVEGTGFGHVSSDAIKSIERARDQGVPIVITTQTVFGRVNLNVYSTGRKMLAAGAIPAGDMTSEAAYAKLSWILARTRELEVVRKMFQRNLAGEVSERHILRLYRHIGGV.

Positions 74 to 407 constitute an Asparaginase/glutaminase domain; that stretch reads ERVYIIGAGG…EVVRKMFQRN (334 aa). Residues T84, T160, D161, and K240 contribute to the active site.

The protein belongs to the asparaginase 1 family. GatD subfamily. Heterodimer of GatD and GatE.

It carries out the reaction L-glutamyl-tRNA(Gln) + L-glutamine + ATP + H2O = L-glutaminyl-tRNA(Gln) + L-glutamate + ADP + phosphate + H(+). In terms of biological role, allows the formation of correctly charged Gln-tRNA(Gln) through the transamidation of misacylated Glu-tRNA(Gln) in organisms which lack glutaminyl-tRNA synthetase. The reaction takes place in the presence of glutamine and ATP through an activated gamma-phospho-Glu-tRNA(Gln). The GatDE system is specific for glutamate and does not act on aspartate. This is Glutamyl-tRNA(Gln) amidotransferase subunit D from Aeropyrum pernix (strain ATCC 700893 / DSM 11879 / JCM 9820 / NBRC 100138 / K1).